The sequence spans 97 residues: Coiled-coil domain-containing protein 167 (97 aa).

Positions 36–80 form a coiled coil; it reads LRKMELTEEGRKSLEKEKSSLSSRLSNYERELKSLRHENRKNMLL. A helical transmembrane segment spans residues 78–95; the sequence is MLLSVAIFLLFAVGYYCW.

Its subcellular location is the membrane. The chain is Coiled-coil domain-containing protein 167 (ccdc167) from Xenopus tropicalis (Western clawed frog).